The primary structure comprises 233 residues: Large ribosomal subunit protein uL1 (233 aa).

This sequence belongs to the universal ribosomal protein uL1 family. Part of the 50S ribosomal subunit.

Its function is as follows. Binds directly to 23S rRNA. The L1 stalk is quite mobile in the ribosome, and is involved in E site tRNA release. In terms of biological role, protein L1 is also a translational repressor protein, it controls the translation of the L11 operon by binding to its mRNA. The polypeptide is Large ribosomal subunit protein uL1 (Hamiltonella defensa subsp. Acyrthosiphon pisum (strain 5AT)).